The primary structure comprises 249 residues: Zinc finger AN1 and C2H2 domain-containing stress-associated protein 13 (249 aa).

AN1-type zinc fingers lie at residues 7 to 55 and 95 to 145; these read PDLG…RGDV and AVKK…KPES. Positions 13, 18, 28, 31, 36, 39, 45, 47, 101, 106, 118, 121, 126, 129, 135, and 137 each coordinate Zn(2+). The tract at residues 194–213 is disordered; the sequence is FASGNDGNSEKTQERNGKQN. Residues 201 to 210 are compositionally biased toward basic and acidic residues; the sequence is NSEKTQERNG. The segment at 220 to 243 adopts a C2H2-type zinc-finger fold; the sequence is DVCPKCSRGFRDPVDLLKHIDKDH.

In terms of biological role, may be involved in environmental stress response. The polypeptide is Zinc finger AN1 and C2H2 domain-containing stress-associated protein 13 (SAP13) (Arabidopsis thaliana (Mouse-ear cress)).